A 113-amino-acid chain; its full sequence is Protein translation factor SUI1 homolog (113 aa).

Positions 1-24 (MSELDSQVPTAFDPFADANAEDSG) are disordered. At serine 2 the chain carries N-acetylserine.

This sequence belongs to the SUI1 family.

Its function is as follows. Probably involved in translation. This chain is Protein translation factor SUI1 homolog, found in Brassica oleracea (Wild cabbage).